The following is a 277-amino-acid chain: Bifunctional protein FolD (277 aa).

NADP(+) contacts are provided by residues 159 to 161, Ser-184, and Ile-225; that span reads GRS.

Belongs to the tetrahydrofolate dehydrogenase/cyclohydrolase family. Homodimer.

It carries out the reaction (6R)-5,10-methylene-5,6,7,8-tetrahydrofolate + NADP(+) = (6R)-5,10-methenyltetrahydrofolate + NADPH. The enzyme catalyses (6R)-5,10-methenyltetrahydrofolate + H2O = (6R)-10-formyltetrahydrofolate + H(+). It functions in the pathway one-carbon metabolism; tetrahydrofolate interconversion. Its function is as follows. Catalyzes the oxidation of 5,10-methylenetetrahydrofolate to 5,10-methenyltetrahydrofolate and then the hydrolysis of 5,10-methenyltetrahydrofolate to 10-formyltetrahydrofolate. In Acholeplasma laidlawii (strain PG-8A), this protein is Bifunctional protein FolD.